A 323-amino-acid polypeptide reads, in one-letter code: Beta-ketoacyl-[acyl-carrier-protein] synthase III (323 aa).

Active-site residues include C113 and H250. The segment at Q251 to R255 is ACP-binding. The active site involves N280.

Belongs to the thiolase-like superfamily. FabH family. In terms of assembly, homodimer.

It is found in the cytoplasm. It carries out the reaction malonyl-[ACP] + acetyl-CoA + H(+) = 3-oxobutanoyl-[ACP] + CO2 + CoA. Its pathway is lipid metabolism; fatty acid biosynthesis. Its function is as follows. Catalyzes the condensation reaction of fatty acid synthesis by the addition to an acyl acceptor of two carbons from malonyl-ACP. Catalyzes the first condensation reaction which initiates fatty acid synthesis and may therefore play a role in governing the total rate of fatty acid production. Possesses both acetoacetyl-ACP synthase and acetyl transacylase activities. Its substrate specificity determines the biosynthesis of branched-chain and/or straight-chain of fatty acids. The sequence is that of Beta-ketoacyl-[acyl-carrier-protein] synthase III from Paracoccus denitrificans (strain Pd 1222).